Here is a 272-residue protein sequence, read N- to C-terminus: Heat stress transcription factor A-7a (272 aa).

The tract at residues 1–26 (MMNPFLPEGCDPPPPPQPMEGLHENA) is disordered. Residues 27–121 (PPPFLTKTFE…LLKNIKRRNP (95 aa)) mediate DNA binding. Positions 132–186 (ACNELRREKQVLMMEIVSLRQQQQTTKSYIKAMEQRIEGTERKQRQMMSFLARAM) are hydrophobic repeat HR-A/B. Positions 201–216 (KKIKELEDNESAKRKR) match the Bipartite nuclear localization signal motif. The span at 203–212 (IKELEDNESA) shows a compositional bias: basic and acidic residues. Residues 203 to 223 (IKELEDNESAKRKRGSSSMSE) form a disordered region. The AHA motif lies at 256-265 (DGFWEELLSD).

Belongs to the HSF family. Class A subfamily. In terms of assembly, homotrimer. Post-translationally, exhibits temperature-dependent phosphorylation.

It localises to the nucleus. Functionally, transcriptional activator that specifically binds DNA sequence 5'-AGAAnnTTCT-3' known as heat shock promoter elements (HSE). The chain is Heat stress transcription factor A-7a (HSFA7A) from Arabidopsis thaliana (Mouse-ear cress).